We begin with the raw amino-acid sequence, 326 residues long: E3 ubiquitin-protein ligase SINAT3 (326 aa).

The segment at 1 to 44 (MDLDSMDCTSTMDVTDDEEIHQDRHSYASVSKHHHTNNNTTNVN) is disordered. The segment at 63-99 (CPVCTNSMYPPIHQCHNGHTLCSTCKARVHNRCPTCR) adopts an RING-type zinc-finger fold. An SBD region spans residues 113 to 306 (VAESLELPCK…KELKLRVTGR (194 aa)). An SIAH-type zinc finger spans residues 116–176 (SLELPCKHMS…LVAHLRDDHK (61 aa)). Zn(2+) is bound by residues cysteine 121, cysteine 128, histidine 140, cysteine 144, cysteine 151, cysteine 158, histidine 170, and histidine 175.

Belongs to the SINA (Seven in absentia) family. As to quaternary structure, interacts with SINAT6. Interacts with WAV3. Interacts with FREE1. Interacts with ELC/VPS23A.

Its subcellular location is the endosome. The protein resides in the multivesicular body. The protein localises to the cytoplasmic vesicle. It localises to the autophagosome. It carries out the reaction S-ubiquitinyl-[E2 ubiquitin-conjugating enzyme]-L-cysteine + [acceptor protein]-L-lysine = [E2 ubiquitin-conjugating enzyme]-L-cysteine + N(6)-ubiquitinyl-[acceptor protein]-L-lysine.. It functions in the pathway protein modification; protein ubiquitination. In terms of biological role, E3 ubiquitin-protein ligase that mediates ubiquitination and subsequent proteasomal degradation of target proteins. E3 ubiquitin ligases accept ubiquitin from an E2 ubiquitin-conjugating enzyme in the form of a thioester and then directly transfers the ubiquitin to targeted substrates. It probably triggers the ubiquitin-mediated degradation of different substrates. Modulates directly the ubiquitination and proteasomal-dependent degradation of FREE1, a component of the ESCRT-I complex. Modulates directly the ubiquitination and proteasomal-dependent degradation of ELC/VPS23A, a component of the ESCRT-I complex. The chain is E3 ubiquitin-protein ligase SINAT3 from Arabidopsis thaliana (Mouse-ear cress).